Reading from the N-terminus, the 158-residue chain is N5-carboxyaminoimidazole ribonucleotide mutase (158 aa).

Ser10, Asp13, and Arg40 together coordinate substrate.

Belongs to the AIR carboxylase family. Class I subfamily.

The enzyme catalyses 5-carboxyamino-1-(5-phospho-D-ribosyl)imidazole + H(+) = 5-amino-1-(5-phospho-D-ribosyl)imidazole-4-carboxylate. It participates in purine metabolism; IMP biosynthesis via de novo pathway; 5-amino-1-(5-phospho-D-ribosyl)imidazole-4-carboxylate from 5-amino-1-(5-phospho-D-ribosyl)imidazole (N5-CAIR route): step 2/2. In terms of biological role, catalyzes the conversion of N5-carboxyaminoimidazole ribonucleotide (N5-CAIR) to 4-carboxy-5-aminoimidazole ribonucleotide (CAIR). This chain is N5-carboxyaminoimidazole ribonucleotide mutase, found in Saccharolobus solfataricus (strain ATCC 35092 / DSM 1617 / JCM 11322 / P2) (Sulfolobus solfataricus).